Here is a 762-residue protein sequence, read N- to C-terminus: Polyadenylate-binding protein, cytoplasmic and nuclear (762 aa).

The disordered stretch occupies residues 39–58; sequence TGEEIDTAGPTPSSAAPHPQ. Positions 48-58 are enriched in low complexity; that stretch reads PTPSSAAPHPQ. RRM domains follow at residues 61–139, 149–226, 242–320, and 346–470; these read ASLY…WSQR, GNVF…HHIP, TNIY…RAQK, and VNLY…LAQR. Disordered regions lie at residues 376 to 429, 596 to 663, and 740 to 762; these read KVMR…KSKL, SALA…AGAP, and VRQQ…EEKA. The segment covering 389–425 has biased composition (basic and acidic residues); that stretch reads GESKEGEESEKNKENKPEEKEGDDSKPEEKEGEDSKS. A compositionally biased stretch (gly residues) spans 600–612; sequence GGRGGPAGRGPMQ. Positions 645 to 663 are enriched in low complexity; sequence AAGRAPAGAPAGARGAGAP. A PABC domain is found at 664-741; it reads EGLQGQLAAV…ALAVYDDYVR (78 aa). The span at 753 to 762 shows a compositional bias: basic and acidic residues; the sequence is SKEEKTEEKA.

Belongs to the polyadenylate-binding protein type-1 family.

The protein resides in the cytoplasm. It localises to the nucleus. Functionally, binds the poly(A) tail of mRNA. Appears to be an important mediator of the multiple roles of the poly(A) tail in mRNA biogenesis, stability and translation. In the nucleus, involved in both mRNA cleavage and polyadenylation. Is also required for efficient mRNA export to the cytoplasm. Acts in concert with a poly(A)-specific nuclease (PAN) to affect poly(A) tail shortening, which may occur concomitantly with either nucleocytoplasmic mRNA transport or translational initiation. In the cytoplasm, stimulates translation initiation and regulates mRNA decay through translation termination-coupled poly(A) shortening, probably mediated by PAN. The sequence is that of Polyadenylate-binding protein, cytoplasmic and nuclear (PAB1) from Pyricularia oryzae (strain 70-15 / ATCC MYA-4617 / FGSC 8958) (Rice blast fungus).